We begin with the raw amino-acid sequence, 443 residues long: Large ribosomal subunit protein mL50 (443 aa).

The tract at residues 121 to 145 (QPTRADAPEKIRDPNYEPATSGAGL) is disordered. Positions 126–135 (DAPEKIRDPN) are enriched in basic and acidic residues.

It belongs to the mitochondrion-specific ribosomal protein mL50 family. In terms of assembly, component of the mitochondrial large ribosomal subunit (mt-LSU). Mature N.crassa 74S mitochondrial ribosomes consist of a small (37S) and a large (54S) subunit. The 37S small subunit contains a 16S ribosomal RNA (16S mt-rRNA) and 32 different proteins. The 54S large subunit contains a 23S rRNA (23S mt-rRNA) and 42 different proteins.

Its subcellular location is the mitochondrion. Functionally, component of the mitochondrial ribosome (mitoribosome), a dedicated translation machinery responsible for the synthesis of mitochondrial genome-encoded proteins, including at least some of the essential transmembrane subunits of the mitochondrial respiratory chain. The mitoribosomes are attached to the mitochondrial inner membrane and translation products are cotranslationally integrated into the membrane. The chain is Large ribosomal subunit protein mL50 (mrpl13) from Neurospora crassa (strain ATCC 24698 / 74-OR23-1A / CBS 708.71 / DSM 1257 / FGSC 987).